The chain runs to 314 residues: Homoserine O-acetyltransferase (314 aa).

The active-site Acyl-thioester intermediate is C142. Residues K163 and S192 each coordinate substrate. H235 (proton acceptor) is an active-site residue. The active site involves E237. Substrate is bound at residue R249.

The protein belongs to the MetA family.

It localises to the cytoplasm. The catalysed reaction is L-homoserine + acetyl-CoA = O-acetyl-L-homoserine + CoA. Its pathway is amino-acid biosynthesis; L-methionine biosynthesis via de novo pathway; O-acetyl-L-homoserine from L-homoserine: step 1/1. Its function is as follows. Transfers an acetyl group from acetyl-CoA to L-homoserine, forming acetyl-L-homoserine. This is Homoserine O-acetyltransferase from Streptococcus mutans serotype c (strain ATCC 700610 / UA159).